The primary structure comprises 470 residues: ATP synthase subunit beta (470 aa).

155–162 (GGAGVGKT) contacts ATP.

The protein belongs to the ATPase alpha/beta chains family. As to quaternary structure, F-type ATPases have 2 components, CF(1) - the catalytic core - and CF(0) - the membrane proton channel. CF(1) has five subunits: alpha(3), beta(3), gamma(1), delta(1), epsilon(1). CF(0) has three main subunits: a(1), b(2) and c(9-12). The alpha and beta chains form an alternating ring which encloses part of the gamma chain. CF(1) is attached to CF(0) by a central stalk formed by the gamma and epsilon chains, while a peripheral stalk is formed by the delta and b chains.

The protein resides in the cell membrane. It carries out the reaction ATP + H2O + 4 H(+)(in) = ADP + phosphate + 5 H(+)(out). Functionally, produces ATP from ADP in the presence of a proton gradient across the membrane. The catalytic sites are hosted primarily by the beta subunits. The chain is ATP synthase subunit beta from Lacticaseibacillus casei (Lactobacillus casei).